The chain runs to 1150 residues: Apomucin (1150 aa).

Composition is skewed to low complexity over residues 1-36 (ETAR…TGAS) and 46-79 (SVAG…SSVG). 5 consecutive repeat copies span residues 1 to 44 (ETAR…ETSR), 45 to 125 (ISVA…ETSR), 126 to 206 (ISVA…ETSR), 207 to 287 (ISVA…ETSR), and 288 to 368 (ISVA…ETSR). Positions 1 to 368 (ETARPSVAGS…ASIGQPETSR (368 aa)) are 6 X 81 AA tandem repeats. Disordered stretches follow at residues 1 to 730 (ETAR…KTGI) and 776 to 925 (APGS…PAPL). Residues Ser-46, Ser-50, Ser-51, Ser-57, Ser-58, and Ser-61 are each glycosylated (O-linked (GalNAc...) serine; partial). Thr-66 carries O-linked (GalNAc...) threonine; partial glycosylation. Ser-67 is a glycosylation site (O-linked (GalNAc...) serine; partial). Thr-73 and Thr-74 each carry an O-linked (GalNAc...) threonine; partial glycan. 2 O-linked (GalNAc...) serine; partial glycosylation sites follow: Ser-76 and Ser-77. O-linked (GalNAc...) threonine; partial glycosylation is found at Thr-81 and Thr-83. Over residues 86–117 (PSVAGSGTTGTVSGASGSTGSSSGSPGATGAS) the composition is skewed to low complexity. Ser-87 and Ser-91 each carry an O-linked (GalNAc...) serine; partial glycan. 3 O-linked (GalNAc...) threonine; partial glycosylation sites follow: Thr-93, Thr-94, and Thr-96. Residues Ser-98, Ser-101, and Ser-103 are each glycosylated (O-linked (GalNAc...) serine; partial). Thr-104 carries an O-linked (GalNAc...) threonine; partial glycan. O-linked (GalNAc...) serine; partial glycosylation is found at Ser-106, Ser-107, Ser-108, and Ser-110. The O-linked (GalNAc...) threonine; partial glycan is linked to Thr-114. O-linked (GalNAc...) serine; partial glycosylation is present at Ser-117. O-linked (GalNAc...) threonine; partial glycosylation is present at Thr-123. O-linked (GalNAc...) serine; partial glycosylation is present at Ser-124. 7 stretches are compositionally biased toward low complexity: residues 127–160 (SVAG…SSVG), 167–198 (PSVA…TGAS), 208–241 (SVAG…SSVG), 248–279 (PSVA…TGAS), 289–322 (SVAG…SSVG), 329–360 (PSVA…TGAS), and 370–396 (SVAG…ATTS). A 6; truncated repeat occupies 369 to 391 (ISVAGSSGAPAVSSGASQAAGTS). The N-linked (GlcNAc...) asparagine glycan is linked to Asn-418. The segment covering 442-459 (SYNTEATTSIGRSGTTHT) has biased composition (polar residues). Low complexity predominate over residues 473–506 (SHSSQSSKPGSSVTTPGSPESGSETGTSGEFSTT). 2 stretches are compositionally biased toward polar residues: residues 507–517 (VISGSSHTEAT) and 537–547 (ELSGTTIASGN). N-linked (GlcNAc...) asparagine glycosylation occurs at Asn-547. The span at 548 to 558 (ATTEATTSTET) shows a compositional bias: low complexity. The segment covering 564–586 (TGAQTTVPGSQVSGSETGTSEAV) has biased composition (polar residues). The segment covering 590-625 (AIASGSSSTGTTSGASDSQVTGSRTGTTGVVLGTTV) has biased composition (low complexity). Composition is skewed to polar residues over residues 626-635 (APGSSSTGAT) and 643-661 (GTRS…TTYE). Positions 671 to 682 (GGSGTPGSGINT) are enriched in gly residues. Composition is skewed to polar residues over residues 688–697 (QVTGIQTGTT), 706–729 (LPGS…SKTG), and 779–788 (SFNTKATTPT). Low complexity predominate over residues 790–833 (VRAATGAGTAVGATSRSTGISTGPENSTPGTTETGSGTTSSPGG). Over residues 875 to 908 (ETTTAPRISATGSTSVSKEITASPKVSSPETTAG) the composition is skewed to polar residues. Asn-917, Asn-985, Asn-1002, and Asn-1068 each carry an N-linked (GlcNAc...) asparagine glycan. One can recognise a VWFC domain in the interval 929 to 995 (PVCHGPLGEE…DTCCEIGHCE (67 aa)). Cystine bridges form between Cys-1062/Cys-1109, Cys-1076/Cys-1123, Cys-1085/Cys-1139, and Cys-1089/Cys-1141. Positions 1062-1146 (CKPSPVNVTV…TACSCLDPCQ (85 aa)) constitute a CTCK domain.

In terms of assembly, intermolecular disulfide bonds could help maintain a multimeric mucin structure. Extensively O-glycosylated on most but not all Ser and Thr residues of the repeat units. Highest glycosylation appears to occur on Ser residues which have Gly at positions at +2 or -2 from the glycosylation site or, where Gly is the penultimate residue. The presence of proline (usually at position +3 or -3) appears to also enhance glycosylation. Submaxillary mucosae.

It is found in the secreted. Functionally, apomucin is part of mucin, the major glycoprotein synthesized and secreted by mucous cells of the submaxillary gland. Its highly viscous aqueous solutions serve to lubricate the oral cavity and to protect it from the external environment. The sequence is that of Apomucin from Sus scrofa (Pig).